Consider the following 342-residue polypeptide: MTDLTLALDVMGGDYGPRVTVPATLQALHLYPSLHVVLVGNQPEIEHFLPKAESSIRQRIEILHTTEVVSMSDRPVHALRNRKQSSMRLAIELVRDGKAQACLSAGNTGALMAIAKVLLKTLPGIDRPALVSCLPAVNQKPVYLLDLGANVSCCSETLFQFAVMGSVLSEAVDKNEQPKVALLNVGIEEIKGNDQVQQAGQLLQQSPQINYVGFIEGNDLYSGNVDVIVCDGFVGNITLKTSEGIAKLLVNQLEKGLTKGFFVRLMAKLIAPRINSVLKQMNPDHYNGASLIGLRGIVVKSHGSADESAYLQAITLAVTEAQRRLPKMIEERLESILLDINN.

This sequence belongs to the PlsX family. Homodimer. Probably interacts with PlsY.

Its subcellular location is the cytoplasm. It catalyses the reaction a fatty acyl-[ACP] + phosphate = an acyl phosphate + holo-[ACP]. Its pathway is lipid metabolism; phospholipid metabolism. Catalyzes the reversible formation of acyl-phosphate (acyl-PO(4)) from acyl-[acyl-carrier-protein] (acyl-ACP). This enzyme utilizes acyl-ACP as fatty acyl donor, but not acyl-CoA. The chain is Phosphate acyltransferase from Shewanella woodyi (strain ATCC 51908 / MS32).